Here is a 371-residue protein sequence, read N- to C-terminus: Cytochrome b (371 aa).

Transmembrane regions (helical) follow at residues 24–44 (FGSMLLACLTLQITTGFFLAL), 68–89 (WTMQNLHSIGASMFFICIYIHI), 104–124 (WLSGITLLATLMATAFFGYVL), and 169–189 (FFALHFILPFAIVSLTSVHIV). Heme b is bound by residues histidine 74 and histidine 88. The heme b site is built by histidine 173 and histidine 187. Histidine 192 contacts a ubiquinone. The next 4 membrane-spanning stretches (helical) occupy residues 217 to 237 (YKDTLMLTFMITTLFMIMSFA), 279 to 299 (LGGTLALVMSIAILMTMPFTH), 311 to 331 (LSQLMFWTLIATFITITWTAT), and 338 to 357 (FITIGQLTSILYFSFFMTNP).

This sequence belongs to the cytochrome b family. The cytochrome bc1 complex contains 3 respiratory subunits (MT-CYB, CYC1 and UQCRFS1), 2 core proteins (UQCRC1 and UQCRC2) and probably 6 low-molecular weight proteins. The cofactor is heme b.

The protein resides in the mitochondrion inner membrane. Component of the ubiquinol-cytochrome c reductase complex (complex III or cytochrome b-c1 complex) that is part of the mitochondrial respiratory chain. The b-c1 complex mediates electron transfer from ubiquinol to cytochrome c. Contributes to the generation of a proton gradient across the mitochondrial membrane that is then used for ATP synthesis. In Homoroselaps lacteus (Spotted harlequin snake), this protein is Cytochrome b (MT-CYB).